The primary structure comprises 134 residues: D-ribose pyranase (134 aa).

The Proton donor role is filled by histidine 20. Substrate-binding positions include aspartate 28, histidine 101, and 123–125 (YSN).

Belongs to the RbsD / FucU family. RbsD subfamily. Homodecamer.

It localises to the cytoplasm. The enzyme catalyses beta-D-ribopyranose = beta-D-ribofuranose. It participates in carbohydrate metabolism; D-ribose degradation; D-ribose 5-phosphate from beta-D-ribopyranose: step 1/2. Functionally, catalyzes the interconversion of beta-pyran and beta-furan forms of D-ribose. This chain is D-ribose pyranase, found in Pseudomonas syringae pv. syringae (strain B728a).